The sequence spans 130 residues: Small ribosomal subunit protein uS9 (130 aa).

The protein belongs to the universal ribosomal protein uS9 family.

This chain is Small ribosomal subunit protein uS9, found in Enterococcus faecalis (strain ATCC 700802 / V583).